A 607-amino-acid chain; its full sequence is Zinc finger protein 750 (607 aa).

The CCHC-type zinc-finger motif lies at 25–51 (YQCFQCPFTCNIKSHLFNHMKYNLCKN). Positions 27, 30, 43, and 49 each coordinate Zn(2+). Residues 60 to 78 (MEQTGKASRASQHSPAFSH) show a composition bias toward polar residues. 4 disordered regions span residues 60–133 (MEQT…DKSE), 318–467 (RAVQ…SSQE), 482–511 (QALPNTSETPEKETISNAEVSTTESPQDLE), and 575–607 (GQKRANNRPLRHTNKRAKVKEPSRPRRKRSQNC). Basic and acidic residues-rich tracts occupy residues 79–133 (NSKE…DKSE) and 318–334 (RAVQEHNTGDKGIRESP). Over residues 369–380 (HSGSQSHIISGS) the composition is skewed to low complexity. Residues 421–432 (DKEEDEETEEEI) show a composition bias toward acidic residues. Basic and acidic residues predominate over residues 452–462 (HYPDRELHYDS). Polar residues predominate over residues 496-507 (ISNAEVSTTESP). Residues 579 to 592 (ANNRPLRHTNKRAK) show a composition bias toward basic residues.

It localises to the nucleus. In terms of biological role, transcription factor involved in epidermis differentiation. The sequence is that of Zinc finger protein 750 (znf750) from Danio rerio (Zebrafish).